Consider the following 264-residue polypeptide: Thymidylate synthase (264 aa).

Position 21 (Arg-21) interacts with dUMP. Residue His-51 coordinates (6R)-5,10-methylene-5,6,7,8-tetrahydrofolate. 126–127 (RR) contacts dUMP. Cys-146 (nucleophile) is an active-site residue. Residues 166–169 (RSAD), Asn-177, and 207–209 (HLY) contribute to the dUMP site. A (6R)-5,10-methylene-5,6,7,8-tetrahydrofolate-binding site is contributed by Asp-169. Position 263 (Ala-263) interacts with (6R)-5,10-methylene-5,6,7,8-tetrahydrofolate.

The protein belongs to the thymidylate synthase family. Bacterial-type ThyA subfamily. Homodimer.

The protein resides in the cytoplasm. It carries out the reaction dUMP + (6R)-5,10-methylene-5,6,7,8-tetrahydrofolate = 7,8-dihydrofolate + dTMP. The protein operates within pyrimidine metabolism; dTTP biosynthesis. Its function is as follows. Catalyzes the reductive methylation of 2'-deoxyuridine-5'-monophosphate (dUMP) to 2'-deoxythymidine-5'-monophosphate (dTMP) while utilizing 5,10-methylenetetrahydrofolate (mTHF) as the methyl donor and reductant in the reaction, yielding dihydrofolate (DHF) as a by-product. This enzymatic reaction provides an intracellular de novo source of dTMP, an essential precursor for DNA biosynthesis. The protein is Thymidylate synthase of Rhizobium etli (strain ATCC 51251 / DSM 11541 / JCM 21823 / NBRC 15573 / CFN 42).